The following is a 436-amino-acid chain: Glutamyl-tRNA reductase (436 aa).

Residues 49–52, Ser-109, 114–116, and Gln-120 each bind substrate; these read TCNR and EGQ. Residue Cys-50 is the Nucleophile of the active site. NADP(+) is bound at residue 198–203; that stretch reads GAGRMS.

It belongs to the glutamyl-tRNA reductase family. In terms of assembly, homodimer.

The enzyme catalyses (S)-4-amino-5-oxopentanoate + tRNA(Glu) + NADP(+) = L-glutamyl-tRNA(Glu) + NADPH + H(+). The protein operates within porphyrin-containing compound metabolism; protoporphyrin-IX biosynthesis; 5-aminolevulinate from L-glutamyl-tRNA(Glu): step 1/2. It participates in porphyrin-containing compound metabolism; chlorophyll biosynthesis. In terms of biological role, catalyzes the NADPH-dependent reduction of glutamyl-tRNA(Glu) to glutamate 1-semialdehyde (GSA). The polypeptide is Glutamyl-tRNA reductase (Prochlorococcus marinus (strain MIT 9312)).